The primary structure comprises 611 residues: Chaperone protein DnaK (611 aa).

Phosphothreonine; by autocatalysis is present on threonine 173. Positions alanine 579 to alanine 592 are enriched in low complexity. The interval alanine 579 to asparagine 598 is disordered.

This sequence belongs to the heat shock protein 70 family.

Acts as a chaperone. The chain is Chaperone protein DnaK from Bacillus cereus (strain ATCC 10987 / NRS 248).